A 558-amino-acid chain; its full sequence is Arginine--tRNA ligase (558 aa).

Residues 129–139 (ANPTGPLHVGH) carry the 'HIGH' region motif.

It belongs to the class-I aminoacyl-tRNA synthetase family. In terms of assembly, monomer.

The protein resides in the cytoplasm. It carries out the reaction tRNA(Arg) + L-arginine + ATP = L-arginyl-tRNA(Arg) + AMP + diphosphate. The chain is Arginine--tRNA ligase from Polaromonas naphthalenivorans (strain CJ2).